We begin with the raw amino-acid sequence, 369 residues long: Allantoicase (369 aa).

A disordered region spans residues proline 341 to glutamine 369. The segment covering asparagine 345–asparagine 357 has biased composition (low complexity).

It belongs to the allantoicase family.

The enzyme catalyses allantoate + H2O = (S)-ureidoglycolate + urea. The protein operates within nitrogen metabolism; (S)-allantoin degradation; (S)-ureidoglycolate from allantoate (aminidohydrolase route): step 1/1. Utilization of purines as secondary nitrogen sources, when primary sources are limiting. This Dictyostelium discoideum (Social amoeba) protein is Allantoicase (allC).